The primary structure comprises 288 residues: Stress response protein YhaX (288 aa).

The chain is Stress response protein YhaX (yhaX) from Bacillus subtilis (strain 168).